Consider the following 924-residue polypeptide: Lon protease homolog 3, mitochondrial (924 aa).

Residues M1–A63 constitute a mitochondrion transit peptide. The Lon N-terminal domain occupies V112–V325. Residue G447 to T454 coordinates ATP. In terms of domain architecture, Lon proteolytic spans Q738 to Y922. Catalysis depends on residues S828 and K871.

This sequence belongs to the peptidase S16 family. As to quaternary structure, homohexamer or homoheptamer. Organized in a ring with a central cavity.

Its subcellular location is the mitochondrion matrix. It catalyses the reaction Hydrolysis of proteins in presence of ATP.. Functionally, ATP-dependent serine protease that mediates the selective degradation of misfolded, unassembled or oxidatively damaged polypeptides as well as certain short-lived regulatory proteins in the mitochondrial matrix. May also have a chaperone function in the assembly of inner membrane protein complexes. Participates in the regulation of mitochondrial gene expression and in the maintenance of the integrity of the mitochondrial genome. Binds to mitochondrial DNA in a site-specific manner. This is Lon protease homolog 3, mitochondrial (LON3) from Arabidopsis thaliana (Mouse-ear cress).